A 489-amino-acid polypeptide reads, in one-letter code: Trehalose-6-phosphate synthase (489 aa).

Position 22 (R22) interacts with D-glucose 6-phosphate. 42–43 contributes to the UDP-alpha-D-glucose binding site; the sequence is GG. D-glucose 6-phosphate-binding residues include Y94 and D148. UDP-alpha-D-glucose-binding residues include R290 and K295. R328 is a D-glucose 6-phosphate binding site. 393 to 397 is a UDP-alpha-D-glucose binding site; that stretch reads LVAKE.

Belongs to the glycosyltransferase 20 family. Homotetramer.

It catalyses the reaction ADP-alpha-D-glucose + D-glucose 6-phosphate = alpha,alpha-trehalose 6-phosphate + ADP + H(+). It carries out the reaction CDP-alpha-D-glucose + D-glucose 6-phosphate = alpha,alpha-trehalose 6-phosphate + CDP + H(+). The enzyme catalyses GDP-alpha-D-glucose + D-glucose 6-phosphate = alpha,alpha-trehalose 6-phosphate + GDP + H(+). The catalysed reaction is TDP-alpha-D-glucose + D-glucose 6-phosphate = 5-methyl-UDP + alpha,alpha-trehalose 6-phosphate + H(+). It catalyses the reaction D-glucose 6-phosphate + UDP-alpha-D-glucose = alpha,alpha-trehalose 6-phosphate + UDP + H(+). It functions in the pathway glycan biosynthesis; trehalose biosynthesis. Its function is as follows. Probably involved in the osmoprotection via the biosynthesis of trehalose and in the production of glycogen and alpha-glucan via the TreS-Pep2 branch involved in the biosynthesis of maltose-1-phosphate (M1P). Catalyzes the transfer of glucose from UDP-glucose (UDP-Glc) to D-glucose 6-phosphate (Glc-6-P) to form trehalose-6-phosphate. Probably also able to use ADP-Glc, CDP-Glc, GDP-Glc and TDP-Glc as glucosyl donors. This is Trehalose-6-phosphate synthase from Mycobacterium sp. (strain KMS).